Consider the following 836-residue polypeptide: Translation initiation factor IF-2 (836 aa).

The disordered stretch occupies residues 1 to 233 (MSDTDGKKPL…RSLAAMKRKQ (233 aa)). A compositionally biased stretch (polar residues) spans 18–27 (SGQVKQSFSH). Residues 50 to 60 (SGSSTTTSSPS) show a composition bias toward low complexity. Residues 88–156 (KLREVEDAKR…AARRAEEAKR (69 aa)) are compositionally biased toward basic and acidic residues. The segment covering 167–176 (PAESRASAPP) has biased composition (low complexity). Positions 185–206 (SRKEREREADRDRTTKKDDSRR) are enriched in basic and acidic residues. Positions 333–501 (PRPPIITIMG…NIALQAEILD (169 aa)) constitute a tr-type G domain. Residues 342-349 (GHVDHGKT) form a G1 region. A GTP-binding site is contributed by 342–349 (GHVDHGKT). Positions 367 to 371 (GITQH) are G2. Residues 389 to 392 (DTPG) are G3. GTP contacts are provided by residues 389–393 (DTPGH) and 443–446 (NKID). Positions 443 to 446 (NKID) are G4. Residues 479–481 (SAK) are G5.

Belongs to the TRAFAC class translation factor GTPase superfamily. Classic translation factor GTPase family. IF-2 subfamily.

The protein localises to the cytoplasm. Functionally, one of the essential components for the initiation of protein synthesis. Protects formylmethionyl-tRNA from spontaneous hydrolysis and promotes its binding to the 30S ribosomal subunits. Also involved in the hydrolysis of GTP during the formation of the 70S ribosomal complex. In Cereibacter sphaeroides (strain ATCC 17023 / DSM 158 / JCM 6121 / CCUG 31486 / LMG 2827 / NBRC 12203 / NCIMB 8253 / ATH 2.4.1.) (Rhodobacter sphaeroides), this protein is Translation initiation factor IF-2.